The sequence spans 166 residues: Large ribosomal subunit protein uL10 (166 aa).

The protein belongs to the universal ribosomal protein uL10 family. In terms of assembly, part of the ribosomal stalk of the 50S ribosomal subunit. The N-terminus interacts with L11 and the large rRNA to form the base of the stalk. The C-terminus forms an elongated spine to which L12 dimers bind in a sequential fashion forming a multimeric L10(L12)X complex.

In terms of biological role, forms part of the ribosomal stalk, playing a central role in the interaction of the ribosome with GTP-bound translation factors. The chain is Large ribosomal subunit protein uL10 (rplJ) from Streptococcus pyogenes serotype M18 (strain MGAS8232).